We begin with the raw amino-acid sequence, 82 residues long: ATP synthase subunit c (82 aa).

2 helical membrane-spanning segments follow: residues 6 to 26 (LGLT…GCGI) and 49 to 69 (IMVT…YALV).

This sequence belongs to the ATPase C chain family. F-type ATPases have 2 components, F(1) - the catalytic core - and F(0) - the membrane proton channel. F(1) has five subunits: alpha(3), beta(3), gamma(1), delta(1), epsilon(1). F(0) has three main subunits: a(1), b(2) and c(10-14). The alpha and beta chains form an alternating ring which encloses part of the gamma chain. F(1) is attached to F(0) by a central stalk formed by the gamma and epsilon chains, while a peripheral stalk is formed by the delta and b chains.

It is found in the cell inner membrane. F(1)F(0) ATP synthase produces ATP from ADP in the presence of a proton or sodium gradient. F-type ATPases consist of two structural domains, F(1) containing the extramembraneous catalytic core and F(0) containing the membrane proton channel, linked together by a central stalk and a peripheral stalk. During catalysis, ATP synthesis in the catalytic domain of F(1) is coupled via a rotary mechanism of the central stalk subunits to proton translocation. In terms of biological role, key component of the F(0) channel; it plays a direct role in translocation across the membrane. A homomeric c-ring of between 10-14 subunits forms the central stalk rotor element with the F(1) delta and epsilon subunits. The sequence is that of ATP synthase subunit c from Nitratidesulfovibrio vulgaris (strain ATCC 29579 / DSM 644 / CCUG 34227 / NCIMB 8303 / VKM B-1760 / Hildenborough) (Desulfovibrio vulgaris).